The primary structure comprises 536 residues: Membrane protein insertase YidC (536 aa).

A helical transmembrane segment spans residues 5-25 (ALIAVILSIVFFYGYSALFPP). The interval 30 to 54 (APAPSAQQAVTGSQPGAPQASVAAV) is disordered. The span at 31–54 (PAPSAQQAVTGSQPGAPQASVAAV) shows a compositional bias: low complexity. The next 4 membrane-spanning stretches (helical) occupy residues 350–370 (YGIA…PLTH), 420–440 (LPML…MFSI), 454–474 (LAGK…MVIQ), and 494–514 (PVVF…YWLV).

The protein belongs to the OXA1/ALB3/YidC family. Type 1 subfamily. Interacts with the Sec translocase complex via SecD. Specifically interacts with transmembrane segments of nascent integral membrane proteins during membrane integration.

The protein localises to the cell inner membrane. Functionally, required for the insertion and/or proper folding and/or complex formation of integral membrane proteins into the membrane. Involved in integration of membrane proteins that insert both dependently and independently of the Sec translocase complex, as well as at least some lipoproteins. Aids folding of multispanning membrane proteins. The polypeptide is Membrane protein insertase YidC (Geobacter metallireducens (strain ATCC 53774 / DSM 7210 / GS-15)).